A 73-amino-acid polypeptide reads, in one-letter code: Guanine nucleotide-binding protein G(I)/G(S)/G(O) subunit gamma-11 (73 aa).

Residues 51 to 73 (DPLVKGIPEDKNPFKEKGSCVIS) are disordered. Cysteine methyl ester is present on Cys-70. Cys-70 carries S-farnesyl cysteine lipidation. A propeptide spans 71–73 (VIS) (removed in mature form).

It belongs to the G protein gamma family. In terms of assembly, g proteins are composed of 3 units, alpha, beta and gamma. Interacts with beta-1 and beta-3, but not with beta-2. In terms of tissue distribution, abundantly expressed in all tissues tested except for brain.

The protein localises to the cell membrane. In terms of biological role, guanine nucleotide-binding proteins (G proteins) are involved as a modulator or transducer in various transmembrane signaling systems. The beta and gamma chains are required for the GTPase activity, for replacement of GDP by GTP, and for G protein-effector interaction. This is Guanine nucleotide-binding protein G(I)/G(S)/G(O) subunit gamma-11 (GNG11) from Homo sapiens (Human).